Consider the following 448-residue polypeptide: Phosphoglucosamine mutase (448 aa).

The active-site Phosphoserine intermediate is serine 104. Residues serine 104, aspartate 243, aspartate 245, and aspartate 247 each contribute to the Mg(2+) site. Serine 104 carries the post-translational modification Phosphoserine.

It belongs to the phosphohexose mutase family. The cofactor is Mg(2+). In terms of processing, activated by phosphorylation.

The enzyme catalyses alpha-D-glucosamine 1-phosphate = D-glucosamine 6-phosphate. Its function is as follows. Catalyzes the conversion of glucosamine-6-phosphate to glucosamine-1-phosphate. The sequence is that of Phosphoglucosamine mutase from Xylella fastidiosa (strain Temecula1 / ATCC 700964).